A 215-amino-acid chain; its full sequence is Probable Rab-related GTPase (215 aa).

Residue 20–27 (GSSGVGKS) coordinates GTP. The short motif at 42–50 (VSPTIGAAF) is the Effector region element. Residues 69 to 73 (DTAGQ) and 127 to 130 (NKID) contribute to the GTP site. Residues C211 and C212 are each lipidated (S-geranylgeranyl cysteine; by host). C212 carries the post-translational modification Cysteine methyl ester; by host. Positions 213 to 215 (YIS) are cleaved as a propeptide — removed in mature form.

This sequence belongs to the small GTPase superfamily. Rab family.

It is found in the host cell membrane. May be involved in protein transport. The protein is Probable Rab-related GTPase of Acanthamoeba polyphaga mimivirus (APMV).